Reading from the N-terminus, the 368-residue chain is Transcription factor TGA7 (368 aa).

Over residues 70 to 82 (HNQIEAEQPSSND) the composition is skewed to polar residues. The segment at 70–89 (HNQIEAEQPSSNDNQDDDGR) is disordered. Residues 91–151 (HDKMKRRLAQ…LGPSGSINTG (61 aa)) enclose the bZIP domain. 2 coiled-coil regions span residues 92 to 142 (DKMK…QGHL) and 252 to 285 (DQQI…SLAE). The tract at residues 93 to 113 (KMKRRLAQNREAARKSRLRKK) is basic motif. Residues 119 to 133 (LEESRLKLSQLEQEL) form a leucine-zipper region. The 212-residue stretch at 152–363 (IASFEMEYSH…RALSSLWAAR (212 aa)) folds into the DOG1 domain.

This sequence belongs to the bZIP family. As to quaternary structure, binds DNA as a dimer. Interacts with NPR1 and NPR4. Interacts with GRXC7/ROXY1.

Its subcellular location is the nucleus. In terms of biological role, transcriptional activator that binds specifically to the DNA sequence 5'-TGACG-3'. Recognizes ocs elements like the as-1 motif of the cauliflower mosaic virus 35S promoter. Binding to the as-1-like cis elements mediate auxin- and salicylic acid-inducible transcription. May be involved in the induction of the systemic acquired resistance (SAR) via its interaction with NPR1. The chain is Transcription factor TGA7 (TGA7) from Arabidopsis thaliana (Mouse-ear cress).